Here is a 158-residue protein sequence, read N- to C-terminus: Anti-tumor lectin (158 aa).

A Blocked amino end (Gln) modification is found at Gln-1. One can recognise a Galectin domain in the interval 12-155; that stretch reads TSVDLAAPVT…STVVEAVTYT (144 aa). Residues Asn-43, His-59, Arg-63, Asn-72, Arg-74, Trp-80, and Glu-83 each contribute to the N-acetyl-alpha-neuraminyl-(2-&gt;3)-beta-D-galactosyl-(1-&gt;4)-beta-D-glucose site.

As to quaternary structure, homodimer. As to expression, detected in the fruiting body.

In terms of biological role, anti-tumor lectin with DNase activity. Inhibits the growth of several tumor cell lines in vitro. Induces lymphocyte infiltration and necrosis of tumor cells in a mouse tumor model. Induces apoptosis in HeLa cells. Binds N-acetylneuraminyl lactose (N-acetyl-alpha-neuraminyl-(2-&gt;3)-beta-D-galactosyl-(1-&gt;4)-beta-D-glucose). This is Anti-tumor lectin from Cyclocybe aegerita (Black poplar mushroom).